The primary structure comprises 263 residues: Endonuclease 8 (263 aa).

Proline 2 acts as the Schiff-base intermediate with DNA in catalysis. Glutamate 3 functions as the Proton donor in the catalytic mechanism. Lysine 53 (proton donor; for beta-elimination activity) is an active-site residue. 3 residues coordinate DNA: glutamine 70, arginine 125, and asparagine 169. The FPG-type zinc-finger motif lies at 229-263 (KVFHRDGEACERCGGIIEKTTLSSRPFYWCPHCQK). Catalysis depends on arginine 253, which acts as the Proton donor; for delta-elimination activity.

Belongs to the FPG family. Requires Zn(2+) as cofactor.

The catalysed reaction is 2'-deoxyribonucleotide-(2'-deoxyribose 5'-phosphate)-2'-deoxyribonucleotide-DNA = a 3'-end 2'-deoxyribonucleotide-(2,3-dehydro-2,3-deoxyribose 5'-phosphate)-DNA + a 5'-end 5'-phospho-2'-deoxyribonucleoside-DNA + H(+). Its function is as follows. Involved in base excision repair of DNA damaged by oxidation or by mutagenic agents. Acts as a DNA glycosylase that recognizes and removes damaged bases. Has a preference for oxidized pyrimidines, such as thymine glycol, 5,6-dihydrouracil and 5,6-dihydrothymine. Has AP (apurinic/apyrimidinic) lyase activity and introduces nicks in the DNA strand. Cleaves the DNA backbone by beta-delta elimination to generate a single-strand break at the site of the removed base with both 3'- and 5'-phosphates. In Salmonella enteritidis PT4 (strain P125109), this protein is Endonuclease 8.